The following is a 437-amino-acid chain: Probable E3 ubiquitin-protein ligase TRIML2 (437 aa).

The segment at Thr14–Ile55 adopts a B box-type zinc-finger fold. Positions 19, 22, 41, and 47 each coordinate Zn(2+). A coiled-coil region spans residues Ile55–Glu200. The 199-residue stretch at Asp231–Pro429 folds into the B30.2/SPRY domain.

It catalyses the reaction S-ubiquitinyl-[E2 ubiquitin-conjugating enzyme]-L-cysteine + [acceptor protein]-L-lysine = [E2 ubiquitin-conjugating enzyme]-L-cysteine + N(6)-ubiquitinyl-[acceptor protein]-L-lysine.. It functions in the pathway protein modification; protein ubiquitination. This Homo sapiens (Human) protein is Probable E3 ubiquitin-protein ligase TRIML2.